The primary structure comprises 212 residues: Pyridoxine/pyridoxamine 5'-phosphate oxidase (212 aa).

FMN contacts are provided by residues 61–66 (RTVLLK), 76–77 (FT), K82, K83, and Q105. Substrate is bound at residue K66. Residues Y123, R127, and S131 each contribute to the substrate site. Residues 140 to 141 (QS) and W185 each bind FMN. Residue 191–193 (RLH) participates in substrate binding. R195 contacts FMN.

It belongs to the pyridoxamine 5'-phosphate oxidase family. In terms of assembly, homodimer. FMN serves as cofactor.

The catalysed reaction is pyridoxamine 5'-phosphate + O2 + H2O = pyridoxal 5'-phosphate + H2O2 + NH4(+). The enzyme catalyses pyridoxine 5'-phosphate + O2 = pyridoxal 5'-phosphate + H2O2. Its pathway is cofactor metabolism; pyridoxal 5'-phosphate salvage; pyridoxal 5'-phosphate from pyridoxamine 5'-phosphate: step 1/1. It participates in cofactor metabolism; pyridoxal 5'-phosphate salvage; pyridoxal 5'-phosphate from pyridoxine 5'-phosphate: step 1/1. In terms of biological role, catalyzes the oxidation of either pyridoxine 5'-phosphate (PNP) or pyridoxamine 5'-phosphate (PMP) into pyridoxal 5'-phosphate (PLP). The sequence is that of Pyridoxine/pyridoxamine 5'-phosphate oxidase from Vesicomyosocius okutanii subsp. Calyptogena okutanii (strain HA).